The following is a 391-amino-acid chain: Casein kinase II subunit alpha (391 aa).

The segment at 36-41 (QDDYQL) is interaction with beta subunit. A Protein kinase domain is found at 39–324 (YQLVRKLGRG…AREAMEHPYF (286 aa)). Residues 45–53 (LGRGKYSEV) and Lys-68 each bind ATP. Asp-156 acts as the Proton acceptor in catalysis. Phosphothreonine; by CDK1 occurs at positions 344 and 360. A phosphoserine; by CDK1 mark is found at Ser-362 and Ser-370.

Belongs to the protein kinase superfamily. Ser/Thr protein kinase family. CK2 subfamily. Heterotetramer composed of two catalytic subunits (alpha chain and/or alpha' chain) and two regulatory subunits (beta chains). The tetramer can exist as a combination of 2 alpha/2 beta, 2 alpha'/2 beta or 1 alpha/1 alpha'/2 beta subunits. Also part of a CK2-SPT16-SSRP1 complex composed of SSRP1, SUPT16H, CSNK2A1, CSNK2A2 and CSNK2B, which forms following UV irradiation. Interacts with RNPS1. Interacts with SNAI1. Interacts with PML. Interacts with CCAR2. Interacts with HIRIP3. Phosphorylated at Thr-344, Thr-360, Ser-362 and Ser-370 by CDK1 in prophase and metaphase and dephosphorylated during anaphase. Phosphorylation does not directly affect casein kinase 2 activity, but may contribute to its regulation by forming binding sites for interacting proteins and/or targeting it to different compartments.

Its subcellular location is the nucleus. The enzyme catalyses L-seryl-[protein] + ATP = O-phospho-L-seryl-[protein] + ADP + H(+). It carries out the reaction L-threonyl-[protein] + ATP = O-phospho-L-threonyl-[protein] + ADP + H(+). With respect to regulation, constitutively active protein kinase whose activity is not directly affected by phosphorylation. Seems to be regulated by level of expression and localization. Functionally, catalytic subunit of a constitutively active serine/threonine-protein kinase complex that phosphorylates a large number of substrates containing acidic residues C-terminal to the phosphorylated serine or threonine. Regulates numerous cellular processes, such as cell cycle progression, apoptosis and transcription, as well as viral infection. May act as a regulatory node which integrates and coordinates numerous signals leading to an appropriate cellular response. During mitosis, functions as a component of the p53/TP53-dependent spindle assembly checkpoint (SAC) that maintains cyclin-B-CDK1 activity and G2 arrest in response to spindle damage. Also required for p53/TP53-mediated apoptosis, phosphorylating 'Ser-392' of p53/TP53 following UV irradiation. Phosphorylates a number of DNA repair proteins in response to DNA damage, such as MDC1, MRE11, RAD9A, RAD51 and HTATSF1, promoting their recruitment to DNA damage sites. Can also negatively regulate apoptosis. Phosphorylates the caspases CASP9 and CASP2 and the apoptotic regulator NOL3. Phosphorylation protects CASP9 from cleavage and activation by CASP8, and inhibits the dimerization of CASP2 and activation of CASP8. Phosphorylates YY1, protecting YY1 from cleavage by CASP7 during apoptosis. Regulates transcription by direct phosphorylation of RNA polymerases I, II, III and IV. Also phosphorylates and regulates numerous transcription factors including NF-kappa-B, STAT1, CREB1, IRF1, IRF2, ATF1, ATF4, SRF, MAX, JUN, FOS, MYC and MYB. Phosphorylates Hsp90 and its co-chaperones FKBP4 and CDC37, which is essential for chaperone function. Mediates sequential phosphorylation of FNIP1, promoting its gradual interaction with Hsp90, leading to activate both kinase and non-kinase client proteins of Hsp90. Regulates Wnt signaling by phosphorylating CTNNB1 and the transcription factor LEF1. Acts as an ectokinase that phosphorylates several extracellular proteins. Phosphorylates PML at 'Ser-565' and primes it for ubiquitin-mediated degradation. Plays an important role in the circadian clock function by phosphorylating BMAL1 at 'Ser-90' which is pivotal for its interaction with CLOCK and which controls CLOCK nuclear entry. Phosphorylates FMR1, promoting FMR1-dependent formation of a membraneless compartment. May phosphorylate histone H2A on 'Ser-1'. The protein is Casein kinase II subunit alpha (Csnk2a1) of Mus musculus (Mouse).